A 360-amino-acid polypeptide reads, in one-letter code: Membrane-bound lytic murein transglycosylase C (360 aa).

The N-terminal stretch at 1–16 is a signal peptide; the sequence is MKKYLALALIAPLLVS. A lipid anchor (N-palmitoyl cysteine) is attached at Cys-17. The S-diacylglycerol cysteine moiety is linked to residue Cys-17.

This sequence belongs to the transglycosylase Slt family.

The protein localises to the cell outer membrane. It catalyses the reaction Exolytic cleavage of the (1-&gt;4)-beta-glycosidic linkage between N-acetylmuramic acid (MurNAc) and N-acetylglucosamine (GlcNAc) residues in peptidoglycan, from either the reducing or the non-reducing ends of the peptidoglycan chains, with concomitant formation of a 1,6-anhydrobond in the MurNAc residue.. Functionally, murein-degrading enzyme. May play a role in recycling of muropeptides during cell elongation and/or cell division. The sequence is that of Membrane-bound lytic murein transglycosylase C from Klebsiella pneumoniae (strain 342).